A 500-amino-acid chain; its full sequence is MDKLQYELQGYLQIDRYRKQRFLYPLLFREYIYALAHDHGLNSSIFYEPTENLGYDNKFSSLIVKRLITRLHQQNHLITSVNYSRFVGPNRSFYSQTIPEGFAGIMEISFSMRLVSSLERIAKYQNLRSIHSIFPFLEDKLSHLSYVSDILIPYPIHLEILLQTLRTRIRDAPSLHLLRCFLHEHHNCNSPITPKKCISIENQRLFLFLYNSHVYECESILVFLRKQSSHLRSISFLAFLERTHFYGKIKHLVVAPRNDSQRTLPLWFFKEPLMHYVRYQGKSIMASRCTNLLMXKWKYYLVNFWQCHFHLWSQPSRIHINELSNHSFYFLGYLSGVRLTPWVIRSQMVENSFMIDTAIKRFDTIVPIFPLIGSLVKAKFCNVSGHPTSKSVWADLSDSDIIARFGWICRNLSHYHSGSSKKHSLCRIKYILRLSCARTLARKHKSTVRAICKRLGSKLLEEFLTEEQEIVSFIFRRTRLHSERIWYLDIIRINGLVPNS.

It belongs to the intron maturase 2 family. MatK subfamily.

It is found in the plastid. Its subcellular location is the chloroplast. In terms of biological role, usually encoded in the trnK tRNA gene intron. Probably assists in splicing its own and other chloroplast group II introns. The protein is Maturase K of Brasenia schreberi (Water shield).